Reading from the N-terminus, the 1498-residue chain is DNA-directed RNA polymerase subunit beta' (1498 aa).

Zn(2+) is bound by residues cysteine 67, cysteine 69, cysteine 82, and cysteine 85. 3 residues coordinate Mg(2+): aspartate 499, aspartate 501, and aspartate 503. The Zn(2+) site is built by cysteine 867, cysteine 943, cysteine 950, and cysteine 953.

It belongs to the RNA polymerase beta' chain family. As to quaternary structure, the RNAP catalytic core consists of 2 alpha, 1 beta, 1 beta' and 1 omega subunit. When a sigma factor is associated with the core the holoenzyme is formed, which can initiate transcription. The cofactor is Mg(2+). Zn(2+) is required as a cofactor.

The catalysed reaction is RNA(n) + a ribonucleoside 5'-triphosphate = RNA(n+1) + diphosphate. Its function is as follows. DNA-dependent RNA polymerase catalyzes the transcription of DNA into RNA using the four ribonucleoside triphosphates as substrates. The polypeptide is DNA-directed RNA polymerase subunit beta' (Chlorobium luteolum (strain DSM 273 / BCRC 81028 / 2530) (Pelodictyon luteolum)).